A 163-amino-acid chain; its full sequence is Nitrogen regulatory protein (163 aa).

In terms of domain architecture, PTS EIIA type-2 spans 12-156 (SVLNRECTRS…EELYQIITDT (145 aa)). The active-site Tele-phosphohistidine intermediate is H73.

It localises to the cytoplasm. In terms of biological role, seems to have a role in regulating nitrogen assimilation. The chain is Nitrogen regulatory protein (ptsN) from Escherichia coli (strain K12).